The chain runs to 319 residues: MRIVVLAGGIGGARFLRGLQRAAPDADITVIGNTGDDIHLFGLKVCPDLDTVMYTLGGGINEEQGWGRADETFHLKEELAAYGVGPEWFGLGDRDFATHIVRTQMLGAGYPLSAVTQALCDRWKPGVRLIPMSDDRIETHVAVDMDGERKAVHFQEYWVRLRASVPAVAVVPVGAEQAKPAPGVLEAIAEADVVLFPPSNPVVSVGTILAVPGIREAIAEAGVPVVGLSPIVGDAPVRGMADKVLAAVGVESTAAAVAEHYGSGLLDGWLVDTVDASVVERVEAAGIRCRAVPLMMTDLDATAQMAREALALAEEVRTP.

Asp50 contacts 7,8-didemethyl-8-hydroxy-5-deazariboflavin.

This sequence belongs to the CofD family. Homodimer. Mg(2+) serves as cofactor.

The catalysed reaction is enolpyruvoyl-2-diphospho-5'-guanosine + 7,8-didemethyl-8-hydroxy-5-deazariboflavin = dehydro coenzyme F420-0 + GMP + H(+). Its pathway is cofactor biosynthesis; coenzyme F420 biosynthesis. Functionally, catalyzes the transfer of the phosphoenolpyruvate moiety from enoylpyruvoyl-2-diphospho-5'-guanosine (EPPG) to 7,8-didemethyl-8-hydroxy-5-deazariboflavin (FO) with the formation of dehydro coenzyme F420-0 and GMP. The chain is Phosphoenolpyruvate transferase from Streptomyces avermitilis (strain ATCC 31267 / DSM 46492 / JCM 5070 / NBRC 14893 / NCIMB 12804 / NRRL 8165 / MA-4680).